Here is a 284-residue protein sequence, read N- to C-terminus: Nucleotide-binding protein SPO0713 (284 aa).

Residue 3-10 (GPSGAGRS) participates in ATP binding. GTP is bound at residue 50–53 (DARN).

The protein belongs to the RapZ-like family.

Functionally, displays ATPase and GTPase activities. This is Nucleotide-binding protein SPO0713 from Ruegeria pomeroyi (strain ATCC 700808 / DSM 15171 / DSS-3) (Silicibacter pomeroyi).